The sequence spans 51 residues: Small ribosomal subunit protein uS14 (51 aa).

Zn(2+) is bound by residues Cys16, Cys19, Cys34, and Cys37.

This sequence belongs to the universal ribosomal protein uS14 family. Zinc-binding uS14 subfamily. In terms of assembly, part of the 30S ribosomal subunit. Zn(2+) is required as a cofactor.

In terms of biological role, binds 16S rRNA, required for the assembly of 30S particles. The protein is Small ribosomal subunit protein uS14 of Archaeoglobus fulgidus (strain ATCC 49558 / DSM 4304 / JCM 9628 / NBRC 100126 / VC-16).